Consider the following 161-residue polypeptide: Lipoprotein signal peptidase (161 aa).

2 helical membrane-spanning segments follow: residues 64–84 (YRVP…AWFY) and 92–114 (VLGR…DRVR). Residues D120 and D138 contribute to the active site. A helical transmembrane segment spans residues 131 to 151 (WPAFNVADSAICVGVGMLLLA).

The protein belongs to the peptidase A8 family.

It is found in the cell inner membrane. It carries out the reaction Release of signal peptides from bacterial membrane prolipoproteins. Hydrolyzes -Xaa-Yaa-Zaa-|-(S,diacylglyceryl)Cys-, in which Xaa is hydrophobic (preferably Leu), and Yaa (Ala or Ser) and Zaa (Gly or Ala) have small, neutral side chains.. It participates in protein modification; lipoprotein biosynthesis (signal peptide cleavage). Its function is as follows. This protein specifically catalyzes the removal of signal peptides from prolipoproteins. The polypeptide is Lipoprotein signal peptidase (Syntrophotalea carbinolica (strain DSM 2380 / NBRC 103641 / GraBd1) (Pelobacter carbinolicus)).